The following is a 1436-amino-acid chain: MAP kinase kinase kinase win1 (1436 aa).

The interval leucine 56–lysine 85 is disordered. Positions serine 76–lysine 85 are enriched in basic and acidic residues. Serine 224 bears the Phosphoserine mark. Residue threonine 226 is modified to Phosphothreonine. The interval glutamate 282–glycine 1123 is interaction with tea4. Residues tryptophan 1120 to valine 1406 enclose the Protein kinase domain. Residues isoleucine 1126–valine 1134 and lysine 1149 each bind ATP. Residue aspartate 1244 is the Proton acceptor of the active site.

Belongs to the protein kinase superfamily. STE Ser/Thr protein kinase family. MAP kinase kinase kinase subfamily. Interacts with tea4.

The catalysed reaction is L-seryl-[protein] + ATP = O-phospho-L-seryl-[protein] + ADP + H(+). It catalyses the reaction L-threonyl-[protein] + ATP = O-phospho-L-threonyl-[protein] + ADP + H(+). Its function is as follows. Involved in a signal transduction pathway that is activated by changes in the osmolarity of the extracellular environment. Activates the wis1 MAP kinase kinase by phosphorylation. The sequence is that of MAP kinase kinase kinase win1 (win1) from Schizosaccharomyces pombe (strain 972 / ATCC 24843) (Fission yeast).